A 209-amino-acid chain; its full sequence is Uracil phosphoribosyltransferase (209 aa).

5-phospho-alpha-D-ribose 1-diphosphate contacts are provided by residues Arg79, Arg104, and 131–139 (DPMLATGGS). Uracil contacts are provided by residues Ile194 and 199–201 (GDA). Position 200 (Asp200) interacts with 5-phospho-alpha-D-ribose 1-diphosphate.

It belongs to the UPRTase family. Requires Mg(2+) as cofactor.

The catalysed reaction is UMP + diphosphate = 5-phospho-alpha-D-ribose 1-diphosphate + uracil. It functions in the pathway pyrimidine metabolism; UMP biosynthesis via salvage pathway; UMP from uracil: step 1/1. With respect to regulation, allosterically activated by GTP. In terms of biological role, catalyzes the conversion of uracil and 5-phospho-alpha-D-ribose 1-diphosphate (PRPP) to UMP and diphosphate. This is Uracil phosphoribosyltransferase from Desulfitobacterium hafniense (strain DSM 10664 / DCB-2).